A 361-amino-acid polypeptide reads, in one-letter code: Glutamine synthetase (361 aa).

In terms of domain architecture, GS beta-grasp spans 23–103 (CQAMYIWVDG…VLCETYKYNK (81 aa)). The GS catalytic domain occupies 110 to 361 (QRWKCMEVMT…LVRTICLNEQ (252 aa)). Glutamate 131 provides a ligand contact to ATP. Mn(2+) is bound by residues glutamate 131, glutamate 133, and glutamate 200. Position 200–205 (200–205 (EFQVGP)) interacts with ATP. 243 to 244 (DW) serves as a coordination point for L-glutamate. Histidine 250 is a binding site for Mn(2+). Residues 252 to 254 (NFS), arginine 316, and arginine 321 each bind ATP. Arginine 316 provides a ligand contact to L-glutamate. 333–335 (YLE) is an ADP binding site. Glutamate 335 serves as a coordination point for Mn(2+). Arginine 337 contacts L-glutamate.

The protein belongs to the glutamine synthetase family. Mg(2+) serves as cofactor. The cofactor is Mn(2+).

It localises to the cytoplasm. Its subcellular location is the cytosol. The protein resides in the microsome. It is found in the mitochondrion. The catalysed reaction is L-glutamate + NH4(+) + ATP = L-glutamine + ADP + phosphate + H(+). In terms of biological role, glutamine synthetase that catalyzes the ATP-dependent conversion of glutamate and ammonia to glutamine. The sequence is that of Glutamine synthetase from Panulirus argus (Caribbean spiny lobster).